Reading from the N-terminus, the 194-residue chain is Holliday junction branch migration complex subunit RuvA (194 aa).

The tract at residues 1-61 (MIASLSGLLE…EDSVSLYGFA (61 aa)) is domain I. A domain II region spans residues 62-136 (SVLECTVFEQ…GKLTSVPLEN (75 aa)). A flexible linker region spans residues 136–140 (NRKQE). The tract at residues 141–194 (QAVDRSAEIVQALIGLGWQRQESAAAVESVLEKDQSLTMPEILRNALRYLAKQE) is domain III.

It belongs to the RuvA family. In terms of assembly, homotetramer. Forms an RuvA(8)-RuvB(12)-Holliday junction (HJ) complex. HJ DNA is sandwiched between 2 RuvA tetramers; dsDNA enters through RuvA and exits via RuvB. An RuvB hexamer assembles on each DNA strand where it exits the tetramer. Each RuvB hexamer is contacted by two RuvA subunits (via domain III) on 2 adjacent RuvB subunits; this complex drives branch migration. In the full resolvosome a probable DNA-RuvA(4)-RuvB(12)-RuvC(2) complex forms which resolves the HJ.

It localises to the cytoplasm. In terms of biological role, the RuvA-RuvB-RuvC complex processes Holliday junction (HJ) DNA during genetic recombination and DNA repair, while the RuvA-RuvB complex plays an important role in the rescue of blocked DNA replication forks via replication fork reversal (RFR). RuvA specifically binds to HJ cruciform DNA, conferring on it an open structure. The RuvB hexamer acts as an ATP-dependent pump, pulling dsDNA into and through the RuvAB complex. HJ branch migration allows RuvC to scan DNA until it finds its consensus sequence, where it cleaves and resolves the cruciform DNA. The chain is Holliday junction branch migration complex subunit RuvA from Tropheryma whipplei (strain Twist) (Whipple's bacillus).